The chain runs to 349 residues: Peroxidase 23 (349 aa).

The signal sequence occupies residues 1–29 (MGFSSSLSCSAMGALIVGCLLLQASNSNA). Gln-30 is subject to Pyrrolidone carboxylic acid. 4 disulfide bridges follow: Cys-40–Cys-120, Cys-73–Cys-78, Cys-126–Cys-329, and Cys-206–Cys-238. Catalysis depends on His-71, which acts as the Proton acceptor. 5 residues coordinate Ca(2+): Asp-72, Val-75, Gly-77, Asp-79, and Ser-81. N-linked (GlcNAc...) asparagine glycosylation is present at Asn-86. Residue Pro-168 coordinates substrate. Residue His-199 participates in heme b binding. Thr-200 contacts Ca(2+). N-linked (GlcNAc...) asparagine glycans are attached at residues Asn-217 and Asn-243. Ca(2+)-binding residues include Asp-251, Thr-254, and Asp-259.

Belongs to the peroxidase family. Classical plant (class III) peroxidase subfamily. Requires heme b as cofactor. The cofactor is Ca(2+).

Its subcellular location is the secreted. The protein localises to the vacuole. It carries out the reaction 2 a phenolic donor + H2O2 = 2 a phenolic radical donor + 2 H2O. Its function is as follows. Removal of H(2)O(2), oxidation of toxic reductants, biosynthesis and degradation of lignin, suberization, auxin catabolism, response to environmental stresses such as wounding, pathogen attack and oxidative stress. These functions might be dependent on each isozyme/isoform in each plant tissue. This Arabidopsis thaliana (Mouse-ear cress) protein is Peroxidase 23 (PER23).